Reading from the N-terminus, the 70-residue chain is Protein SlyX homolog (70 aa).

This sequence belongs to the SlyX family.

The chain is Protein SlyX homolog from Shewanella putrefaciens (strain CN-32 / ATCC BAA-453).